Reading from the N-terminus, the 146-residue chain is 3-dehydroquinate dehydratase (146 aa).

Catalysis depends on Tyr-23, which acts as the Proton acceptor. 3 residues coordinate substrate: Asn-74, His-80, and Asp-87. His-100 acts as the Proton donor in catalysis. Substrate contacts are provided by residues 101–102 (IS) and Arg-111.

It belongs to the type-II 3-dehydroquinase family. In terms of assembly, homododecamer.

It catalyses the reaction 3-dehydroquinate = 3-dehydroshikimate + H2O. It participates in metabolic intermediate biosynthesis; chorismate biosynthesis; chorismate from D-erythrose 4-phosphate and phosphoenolpyruvate: step 3/7. Its function is as follows. Catalyzes a trans-dehydration via an enolate intermediate. This Bacillus cytotoxicus (strain DSM 22905 / CIP 110041 / 391-98 / NVH 391-98) protein is 3-dehydroquinate dehydratase.